We begin with the raw amino-acid sequence, 335 residues long: Probable magnesium transporter NIPA1 (335 aa).

The Extracellular segment spans residues 1 to 7; that stretch reads MDQMSPD. A helical transmembrane segment spans residues 8-28; sequence NINGVILAVSSSIFIGSSFII. Residues 29–55 are Cytoplasmic-facing; that stretch reads KKKGLKKAGASGVRAGEGGYGYLKEPW. Residues 56–76 form a helical membrane-spanning segment; it reads WWAGMITMIVGEVANFAAYAF. The Extracellular portion of the chain corresponds to 77–79; the sequence is APA. The helical transmembrane segment at 80-100 threads the bilayer; that stretch reads ILVTPLGALSIIFSAVLAHFI. Topologically, residues 101 to 104 are cytoplasmic; that stretch reads LKEK. A helical membrane pass occupies residues 105-125; it reads LHMFGILGCILCVVGSTTIVL. Over 126 to 143 the chain is Extracellular; sequence HAPHEQKIESVKQIWQLA. A helical membrane pass occupies residues 144–164; that stretch reads IEPGFLVYSAVIVIVVAILIF. The Cytoplasmic segment spans residues 165 to 179; that stretch reads YYEPRYGKTHMIVYV. The helical transmembrane segment at 180 to 200 threads the bilayer; sequence GICSLMGSLTVMSVKAVAIAI. The Extracellular segment spans residues 201–212; sequence KLTFSGTNQFKY. A helical membrane pass occupies residues 213 to 233; that stretch reads FNTWIFILVVATCCILQINYL. The Cytoplasmic portion of the chain corresponds to 234-244; it reads NKALDTFNTAV. Residues 245–265 form a helical membrane-spanning segment; that stretch reads ISPVYYVMFTTFTIIASMIMF. Topologically, residues 266–272 are extracellular; the sequence is KDWASQS. The chain crosses the membrane as a helical span at residues 273 to 293; sequence GLKIATELCGFVTILSGTFLL. The Cytoplasmic segment spans residues 294 to 335; sequence HKTKDMGNSASGRGSISMPTRDTPVFTNSGSGRSSSSDKVAS. Over residues 303-321 the composition is skewed to polar residues; it reads ASGRGSISMPTRDTPVFTN. The segment at 303 to 335 is disordered; sequence ASGRGSISMPTRDTPVFTNSGSGRSSSSDKVAS. The span at 322–335 shows a compositional bias: low complexity; sequence SGSGRSSSSDKVAS.

Belongs to the NIPA (TC 2.A.7) family. In terms of assembly, homodimer.

The protein localises to the cell membrane. The protein resides in the early endosome. Acts as a Mg(2+) transporter. Can also transport other divalent cations such as Fe(2+), Sr(2+), Ba(2+), Mn(2+) and Co(2+) but to a much less extent than Mg(2+). This is Probable magnesium transporter NIPA1 from Arabidopsis thaliana (Mouse-ear cress).